The chain runs to 427 residues: 3-phosphoshikimate 1-carboxyvinyltransferase (427 aa).

3-phosphoshikimate contacts are provided by Lys22, Ser23, and Arg27. Residue Lys22 coordinates phosphoenolpyruvate. Residues Gly96 and Arg124 each contribute to the phosphoenolpyruvate site. 3-phosphoshikimate is bound by residues Ser169, Ser170, Gln171, Ser197, Asp313, Asn336, and Lys340. Gln171 lines the phosphoenolpyruvate pocket. Residue Asp313 is the Proton acceptor of the active site. Phosphoenolpyruvate is bound by residues Arg344, Arg386, and Lys411.

The protein belongs to the EPSP synthase family. Monomer.

The protein localises to the cytoplasm. It carries out the reaction 3-phosphoshikimate + phosphoenolpyruvate = 5-O-(1-carboxyvinyl)-3-phosphoshikimate + phosphate. It participates in metabolic intermediate biosynthesis; chorismate biosynthesis; chorismate from D-erythrose 4-phosphate and phosphoenolpyruvate: step 6/7. Catalyzes the transfer of the enolpyruvyl moiety of phosphoenolpyruvate (PEP) to the 5-hydroxyl of shikimate-3-phosphate (S3P) to produce enolpyruvyl shikimate-3-phosphate and inorganic phosphate. This chain is 3-phosphoshikimate 1-carboxyvinyltransferase, found in Salmonella choleraesuis (strain SC-B67).